The primary structure comprises 433 residues: Sulfhydrylase FUB7 (433 aa).

At lysine 211 the chain carries N6-(pyridoxal phosphate)lysine.

The protein belongs to the trans-sulfuration enzymes family. It depends on pyridoxal 5'-phosphate as a cofactor.

It functions in the pathway mycotoxin biosynthesis. Its function is as follows. Sulfhydrylase; part of the gene cluster that mediates the biosynthesis of fusaric acid, a mycotoxin with low to moderate toxicity to animals and humans, but with high phytotoxic properties. L-aspartate is suggested as fusaric acid amino acid precursor that is activated and further processed to O-acetyl-L-homoserine by cluster enzymes aspartate kinase FUB3 and homoserine O-acetyltransferase FUB5, as well as enzymes of the primary metabolism. The polyketide synthase (PKS) FUB1 generates the triketide trans-2-hexenal which is presumptively released by the hydrolase FUB4 and linked to the NRPS-bound amino acid precursor by NAD(P)-dependent dehydrogenase FUB6. FUB1, FUB4, and the non-canonical NRPS Fub8 may form an enzyme complex. Further processing of the NRPS-bound intermediate might be carried out by FUB6 and the O-acetylhomoserine FUB7, enabling a spontaneous electrocyclization to close the carbon backbone of fusaric acid. Dihydrofusaric acid is likely to be released via reduction by the thioester reductase (TR) domain of FUB8 whereupon the final oxidation to fusaric acid may (also) be performed by the FMN-dependent dehydrogenase FUB9. This chain is Sulfhydrylase FUB7, found in Gibberella moniliformis (strain M3125 / FGSC 7600) (Maize ear and stalk rot fungus).